The primary structure comprises 293 residues: ATP synthase subunit a (293 aa).

The next 8 membrane-spanning stretches (helical) occupy residues 39 to 59 (QVFGIFVVFIVLLTLFLVYWI), 73 to 93 (FVLLMQMLFVWAQDTTADLIG), 102 to 122 (YFLMLLLYLVSSNLIGLLGGI), 128 to 148 (SLTFTFSLGLATFLGIVIMGI), 172 to 192 (TLIPNPLSFLGEFAPLFSISL), 198 to 218 (ILGGTLILALFYNFWFFAFST), 224 to 244 (LALSLGAIFAGILTPALHVYF), and 245 to 265 (DVVVGTLQGYVFVMLTYNYWA).

Belongs to the ATPase A chain family. As to quaternary structure, F-type ATPases have 2 components, CF(1) - the catalytic core - and CF(0) - the membrane proton channel. CF(1) has five subunits: alpha(3), beta(3), gamma(1), delta(1), epsilon(1). CF(0) has three main subunits: a(1), b(2) and c(9-12). The alpha and beta chains form an alternating ring which encloses part of the gamma chain. CF(1) is attached to CF(0) by a central stalk formed by the gamma and epsilon chains, while a peripheral stalk is formed by the delta and b chains.

Its subcellular location is the cell membrane. Functionally, key component of the proton channel; it plays a direct role in the translocation of protons across the membrane. The sequence is that of ATP synthase subunit a from Mycoplasma pneumoniae (strain ATCC 29342 / M129 / Subtype 1) (Mycoplasmoides pneumoniae).